The primary structure comprises 64 residues: Large ribosomal subunit protein uL29 (64 aa).

This sequence belongs to the universal ribosomal protein uL29 family.

The protein is Large ribosomal subunit protein uL29 of Ligilactobacillus salivarius (strain UCC118) (Lactobacillus salivarius).